A 281-amino-acid chain; its full sequence is Beta-lactamase (281 aa).

Residues 1–24 form the signal peptide; it reads MKKLIFLIVIALVLSACNSNSSHA. S63 serves as the catalytic Acyl-ester intermediate. 225–227 contacts substrate; the sequence is KSG.

Belongs to the class-A beta-lactamase family.

It carries out the reaction a beta-lactam + H2O = a substituted beta-amino acid. The protein is Beta-lactamase (blaZ) of Staphylococcus aureus.